Here is a 1671-residue protein sequence, read N- to C-terminus: DENN domain-containing protein Crag (1671 aa).

One can recognise an MABP domain in the interval 39 to 195 (IEPITDIGVY…DVYLCYKKSM (157 aa)). One can recognise a uDENN domain in the interval 187 to 364 (VYLCYKKSMY…DEVPFPAPSI (178 aa)). The cDENN domain maps to 385-521 (PLPRSGAGFH…AARLLRQTLT (137 aa)). Residues 523–632 (LENAKPISYD…ERSFVSDGDH (110 aa)) form the dDENN domain. 3 disordered regions span residues 997–1160 (QQQQ…PVAS), 1245–1311 (ANST…RLSE), and 1415–1435 (VEESEQSDPLQDGKEQIANGN). Composition is skewed to acidic residues over residues 1011 to 1023 (GDDDDEDEDEDEY) and 1050 to 1061 (YEADEEDEDEVD). Polar residues predominate over residues 1072-1089 (RVQSPTKISPRTPVTQND). Positions 1100–1119 (AASATPTQETQQEQQHSQSQ) are enriched in low complexity. The span at 1136–1147 (RSATFDESTQIG) shows a compositional bias: polar residues. Basic residues predominate over residues 1254-1277 (NGHHPHGLHHGHHHPHHHHHHHSQ). A compositionally biased stretch (basic and acidic residues) spans 1281–1301 (AEQEEHDAAVHEEGKLRRVSS).

Interacts with Cam. Interacts with Rab10. Interacts (via the DENN domains) with Rab11. Expressed in the adult head and body.

It is found in the cytoplasm. Its subcellular location is the cell cortex. The protein resides in the early endosome. The protein localises to the recycling endosome. It localises to the cytoplasmic granule. Calmodulin-binding protein that acts as a guanine exchange factor for Rab10 and Rab11. Essential for maintenance of adult photoreceptor cells. Upon light stimulation, required for trafficking of newly synthesized ninaE (Rh1) from the trans-Golgi network to rhabdomere membranes via Rab11-dependent vesicular transport. During egg development, essential for establishing and maintaining epithelial cell polarity by regulating the correct polarized deposition of basal membrane (BM) proteins in follicular epithelial (FE) cells. Functions by targeting Rab10 to the basal cytoplasm, where it restricts the secretion of BM proteins such as trol/Pcan and vkg/Coll IV to the basal surface. Appears to be involved in regulating the levels and distribution of the guanine nucleotide exchange factor strat, however the two proteins appear to have independent roles in regulating polarized BM protein secretion in the FE. The sequence is that of DENN domain-containing protein Crag from Drosophila melanogaster (Fruit fly).